A 372-amino-acid chain; its full sequence is Beta-1,3-N-acetylglucosaminyltransferase radical fringe (372 aa).

Residues 1-10 (MNSSCLGLRR) are Cytoplasmic-facing. Residues 11–27 (TCFLLSVTAAAVLLLLL) traverse the membrane as a helical; Signal-anchor for type II membrane protein segment. Over 28–372 (PRGQPPAAPR…TIWCPNKKMS (345 aa)) the chain is Lumenal. The span at 30–48 (GQPPAAPRRRPPPAGPSRP) shows a compositional bias: pro residues. A disordered region spans residues 30 to 96 (GQPPAAPRRR…RVRMGPPGGS (67 aa)). Gly residues predominate over residues 64–78 (DRGGGSGAAGGGRGV). Substrate is bound at residue R120. Residue N159 is glycosylated (N-linked (GlcNAc...) asparagine). Intrachain disulfides connect C160-C171 and C189-C253. Residue D193 coordinates substrate. D194 contributes to the Mn(2+) binding site. D283 is an active-site residue. H307 contacts Mn(2+). A disulfide bridge links C357 with C366.

Belongs to the glycosyltransferase 31 family. Mn(2+) serves as cofactor.

Its subcellular location is the golgi apparatus membrane. The catalysed reaction is 3-O-(alpha-L-fucosyl)-L-threonyl-[EGF-like domain protein] + UDP-N-acetyl-alpha-D-glucosamine = 3-O-(N-acetyl-beta-D-glucosaminyl-(1-&gt;3)-alpha-L-fucosyl)-L-threonyl-[EGF-like domain protein] + UDP + H(+). It catalyses the reaction 3-O-(alpha-L-fucosyl)-L-seryl-[EGF-like domain protein] + UDP-N-acetyl-alpha-D-glucosamine = 3-O-(N-acetyl-beta-D-glucosaminyl-(1-&gt;3)-alpha-L-fucosyl)-L-seryl-[EGF-like domain protein] + UDP + H(+). Its function is as follows. Glycosyltransferase that initiates the elongation of O-linked fucose residues attached to EGF-like repeats in the extracellular domain of Notch molecules. Plays an important role in limb outgrowth, it directs the formation and positioning of the apical ectodermal ridge (AER), one of the key organizer centers of vertebrate limb development. This is Beta-1,3-N-acetylglucosaminyltransferase radical fringe (RFNG) from Gallus gallus (Chicken).